The sequence spans 66 residues: Metallothionein (66 aa).

S1 carries the post-translational modification N-acetylserine. Cd(2+)-binding residues include C9, C13, C18, C20, C24, C26, C30, C32, C35, C38, C40, C45, C47, C51, C57, C59, C63, and C65.

The protein belongs to the metallothionein superfamily. Type 2 family.

Functionally, the metallothioneins are involved in the cellular sequestration of toxic metal ions and regulation of essential trace elements. The sequence is that of Metallothionein from Arianta arbustorum (Land snail).